A 234-amino-acid chain; its full sequence is Leucyl/phenylalanyl-tRNA--protein transferase (234 aa).

Belongs to the L/F-transferase family.

It is found in the cytoplasm. The enzyme catalyses N-terminal L-lysyl-[protein] + L-leucyl-tRNA(Leu) = N-terminal L-leucyl-L-lysyl-[protein] + tRNA(Leu) + H(+). The catalysed reaction is N-terminal L-arginyl-[protein] + L-leucyl-tRNA(Leu) = N-terminal L-leucyl-L-arginyl-[protein] + tRNA(Leu) + H(+). It carries out the reaction L-phenylalanyl-tRNA(Phe) + an N-terminal L-alpha-aminoacyl-[protein] = an N-terminal L-phenylalanyl-L-alpha-aminoacyl-[protein] + tRNA(Phe). Functionally, functions in the N-end rule pathway of protein degradation where it conjugates Leu, Phe and, less efficiently, Met from aminoacyl-tRNAs to the N-termini of proteins containing an N-terminal arginine or lysine. The protein is Leucyl/phenylalanyl-tRNA--protein transferase of Klebsiella pneumoniae (strain 342).